Here is a 201-residue protein sequence, read N- to C-terminus: MQTSPLLTQLMEALRCLPGVGPKSAQRMAFTLLQRDRSGGMRLAQALTRAMSEIGHCADCRTFTEQEVCNICSNPRRQENGQICVVESPADIYAIEQTGQYSGRYFVLMGHLSPLDGIGPDDIGLDRLEQRLEAESITEVILATNPTVEGEATANYIAELCAQYGVDASRIAHGVPVGGELEMVDGTTLSHSLAGRHKITF.

A C4-type zinc finger spans residues 57–72 (CADCRTFTEQEVCNIC). Residues 81–176 (GQICVVESPA…DASRIAHGVP (96 aa)) enclose the Toprim domain.

It belongs to the RecR family.

May play a role in DNA repair. It seems to be involved in an RecBC-independent recombinational process of DNA repair. It may act with RecF and RecO. This Klebsiella pneumoniae subsp. pneumoniae (strain ATCC 700721 / MGH 78578) protein is Recombination protein RecR.